Consider the following 288-residue polypeptide: Oxaloacetate decarboxylase (288 aa).

Substrate is bound at residue Ser47. Position 85 (Asp85) interacts with Mg(2+). Arg156 and His232 together coordinate substrate.

The protein belongs to the isocitrate lyase/PEP mutase superfamily. Oxaloacetate decarboxylase family. As to quaternary structure, homotetramer; dimer of dimers. Mg(2+) serves as cofactor.

It carries out the reaction oxaloacetate + H(+) = pyruvate + CO2. In terms of biological role, catalyzes the decarboxylation of oxaloacetate into pyruvate. Seems to play a role in maintaining cellular concentrations of bicarbonate and pyruvate. This is Oxaloacetate decarboxylase from Bradyrhizobium sp. (strain ORS 278).